The primary structure comprises 87 residues: Guanine nucleotide-binding protein subunit gamma (87 aa).

At cysteine 84 the chain carries Cysteine methyl ester. Cysteine 84 is lipidated: S-geranylgeranyl cysteine. Residues 85-87 constitute a propeptide, removed in mature form; that stretch reads LLV.

It belongs to the G protein gamma family. G proteins are composed of 3 units, alpha, beta and gamma. The N-terminus is blocked.

Its subcellular location is the cell membrane. Guanine nucleotide-binding proteins (G proteins) are involved as a modulator or transducer in various transmembrane signaling systems. This major G-protein of the squid photoreceptor is involved in visual transduction. The beta and gamma chains are required for the GTPase activity, for replacement of GDP by GTP, and for G protein-effector interaction. This is Guanine nucleotide-binding protein subunit gamma from Loligo forbesii (Veined squid).